The sequence spans 497 residues: Guanosine-5'-triphosphate,3'-diphosphate pyrophosphatase (497 aa).

This sequence belongs to the GppA/Ppx family. GppA subfamily.

The enzyme catalyses guanosine 3'-diphosphate 5'-triphosphate + H2O = guanosine 3',5'-bis(diphosphate) + phosphate + H(+). It participates in purine metabolism; ppGpp biosynthesis; ppGpp from GTP: step 2/2. Functionally, catalyzes the conversion of pppGpp to ppGpp. Guanosine pentaphosphate (pppGpp) is a cytoplasmic signaling molecule which together with ppGpp controls the 'stringent response', an adaptive process that allows bacteria to respond to amino acid starvation, resulting in the coordinated regulation of numerous cellular activities. The protein is Guanosine-5'-triphosphate,3'-diphosphate pyrophosphatase of Vibrio vulnificus (strain YJ016).